A 377-amino-acid chain; its full sequence is MNNQSENYYHGAQFEALKSAGAIEMLGDGLTGDDLAAIPEHWLSYPAPPASAHTALALLYIFFTFAALVGNGMVIFIFSTTKSLRTSSNFLVLNLAILDFIMMAKAPIFIYNSAMRGFAVGTVGCQIFALMGAYSGIGAGMTNACIAYDRHSTITRPLDGRLSEGKVLLMVAFVWIYSTPWALLPLLKIWGRYVPEGYLTSCSFDYLTNTFDTKLFVACIFTCSYVFPMSLIIYFYSGIVKQVFAHEAALREQAKKMNVESLRANQGGSSESAEIRIAKAALTVCFLFVASWTPYGVMALIGAFGNQQLLTPGVTMIPAVACKAVACISPWVYAIRHPMYRQELQRRMPWLQIDEPDDTVSTATSNTTNSAPPAATA.

Over 1–57 (MNNQSENYYHGAQFEALKSAGAIEMLGDGLTGDDLAAIPEHWLSYPAPPASAHTALA) the chain is Extracellular. An N-linked (GlcNAc...) asparagine glycan is attached at Asn3. The chain crosses the membrane as a helical span at residues 58 to 78 (LLYIFFTFAALVGNGMVIFIF). The Cytoplasmic portion of the chain corresponds to 79–89 (STTKSLRTSSN). A helical membrane pass occupies residues 90–110 (FLVLNLAILDFIMMAKAPIFI). Residues 111–126 (YNSAMRGFAVGTVGCQ) lie on the Extracellular side of the membrane. Cys125 and Cys202 form a disulfide bridge. A helical membrane pass occupies residues 127-146 (IFALMGAYSGIGAGMTNACI). At 147 to 166 (AYDRHSTITRPLDGRLSEGK) the chain is on the cytoplasmic side. The chain crosses the membrane as a helical span at residues 167 to 187 (VLLMVAFVWIYSTPWALLPLL). Topologically, residues 188–214 (KIWGRYVPEGYLTSCSFDYLTNTFDTK) are extracellular. Residues 215–235 (LFVACIFTCSYVFPMSLIIYF) form a helical membrane-spanning segment. The Cytoplasmic portion of the chain corresponds to 236–283 (YSGIVKQVFAHEAALREQAKKMNVESLRANQGGSSESAEIRIAKAALT). The helical transmembrane segment at 284–304 (VCFLFVASWTPYGVMALIGAF) threads the bilayer. The Extracellular portion of the chain corresponds to 305 to 314 (GNQQLLTPGV). Residues 315–335 (TMIPAVACKAVACISPWVYAI) traverse the membrane as a helical segment. The Cytoplasmic segment spans residues 336 to 377 (RHPMYRQELQRRMPWLQIDEPDDTVSTATSNTTNSAPPAATA). Residues 355 to 377 (EPDDTVSTATSNTTNSAPPAATA) are disordered. The segment covering 361-377 (STATSNTTNSAPPAATA) has biased composition (low complexity).

It belongs to the G-protein coupled receptor 1 family. Opsin subfamily. As to expression, in the retina, expression is essentially uniformly distributed, but a higher level is seen in the dorsal region of the retina and in the dorsal rim retinulae.

It is found in the membrane. Functionally, visual pigments are the light-absorbing molecules that mediate vision. They consist of an apoprotein, opsin, covalently linked to cis-retinal. May play a role in photoperiodic photoreception. This chain is Opsin-2 (OP2), found in Manduca sexta (Tobacco hawkmoth).